Consider the following 115-residue polypeptide: Transmembrane protein 218 (115 aa).

The next 3 membrane-spanning stretches (helical) occupy residues 5-25 (VLGVGAGVFILALLWVAVLLL), 38-58 (FSVIFLFFGAVIITSVLLLFP), and 81-101 (YVLLAFLSAIFLGGLFLVLIH).

The protein belongs to the TMEM218 family. Interacts with TMEM67.

It is found in the membrane. It localises to the cell projection. The protein localises to the cilium. In terms of biological role, may be involved in ciliary biogenesis or function. The sequence is that of Transmembrane protein 218 (TMEM218) from Homo sapiens (Human).